The following is a 199-amino-acid chain: Recombination protein RecR (199 aa).

The C4-type zinc finger occupies 56-71 (CSICFNWSAEDPCEIC). Positions 79–174 (STWCVVADVK…GLRMTRLAFG (96 aa)) constitute a Toprim domain.

This sequence belongs to the RecR family.

Functionally, may play a role in DNA repair. It seems to be involved in an RecBC-independent recombinational process of DNA repair. It may act with RecF and RecO. The polypeptide is Recombination protein RecR (Synechococcus sp. (strain JA-3-3Ab) (Cyanobacteria bacterium Yellowstone A-Prime)).